We begin with the raw amino-acid sequence, 375 residues long: Squamosa promoter-binding-like protein 9 (375 aa).

2 disordered regions span residues 1–30 (MEMG…SFSG) and 43–73 (GGGG…QIPR). The span at 18 to 30 (SGGSSTESSSFSG) shows a compositional bias: low complexity. Residues 71-148 (IPRCQVEGCG…AGHNERRRKP (78 aa)) form an SBP-type zinc finger. Residues Cys74, Cys79, Cys96, His99, Cys115, Cys118, His122, and Cys134 each coordinate Zn(2+). Residues 131 to 147 (KRSCRRRLAGHNERRRK) carry the Bipartite nuclear localization signal motif. 2 disordered regions span residues 252–278 (LLSN…NTWR) and 345–375 (SDHH…NWSL). The span at 262 to 275 (NNNNNNNNNNNNNN) shows a compositional bias: low complexity. Basic and acidic residues predominate over residues 345–362 (SDHHHQSRRQYMEDENTR). Residues 363–375 (AYDSSSHHTNWSL) show a composition bias toward polar residues.

Zn(2+) is required as a cofactor.

It localises to the nucleus. The protein resides in the cytoplasm. Trans-acting factor that binds specifically to the consensus nucleotide sequence 5'-TNCGTACAA-3'. The polypeptide is Squamosa promoter-binding-like protein 9 (SPL9) (Arabidopsis thaliana (Mouse-ear cress)).